The following is a 120-amino-acid chain: Large ribosomal subunit protein uL18 (120 aa).

Positions 1–26 (MKLTRRESKQRRHRRVRGKVQGSPER) are disordered. Residues 8–18 (SKQRRHRRVRG) show a composition bias toward basic residues.

This sequence belongs to the universal ribosomal protein uL18 family. Part of the 50S ribosomal subunit; part of the 5S rRNA/L5/L18/L25 subcomplex. Contacts the 5S and 23S rRNAs.

In terms of biological role, this is one of the proteins that bind and probably mediate the attachment of the 5S RNA into the large ribosomal subunit, where it forms part of the central protuberance. This Trichormus variabilis (strain ATCC 29413 / PCC 7937) (Anabaena variabilis) protein is Large ribosomal subunit protein uL18.